The chain runs to 398 residues: Carbamoyl phosphate synthase small chain (398 aa).

Positions 1 to 199 are CPSase; sequence MTPAWATEKP…WNEGFGEQAE (199 aa). 3 residues coordinate L-glutamine: S54, G251, and G253. One can recognise a Glutamine amidotransferase type-1 domain in the interval 203–391; sequence HVVAIDYGVK…VNLIREKRGE (189 aa). Catalysis depends on C280, which acts as the Nucleophile. L-glutamine-binding residues include L281, Q284, N322, G324, and F325. Active-site residues include H364 and E366.

The protein belongs to the CarA family. As to quaternary structure, composed of two chains; the small (or glutamine) chain promotes the hydrolysis of glutamine to ammonia, which is used by the large (or ammonia) chain to synthesize carbamoyl phosphate. Tetramer of heterodimers (alpha,beta)4.

The enzyme catalyses hydrogencarbonate + L-glutamine + 2 ATP + H2O = carbamoyl phosphate + L-glutamate + 2 ADP + phosphate + 2 H(+). It carries out the reaction L-glutamine + H2O = L-glutamate + NH4(+). It participates in amino-acid biosynthesis; L-arginine biosynthesis; carbamoyl phosphate from bicarbonate: step 1/1. The protein operates within pyrimidine metabolism; UMP biosynthesis via de novo pathway; (S)-dihydroorotate from bicarbonate: step 1/3. Its function is as follows. Small subunit of the glutamine-dependent carbamoyl phosphate synthetase (CPSase). CPSase catalyzes the formation of carbamoyl phosphate from the ammonia moiety of glutamine, carbonate, and phosphate donated by ATP, constituting the first step of 2 biosynthetic pathways, one leading to arginine and/or urea and the other to pyrimidine nucleotides. The small subunit (glutamine amidotransferase) binds and cleaves glutamine to supply the large subunit with the substrate ammonia. This chain is Carbamoyl phosphate synthase small chain, found in Mesorhizobium japonicum (strain LMG 29417 / CECT 9101 / MAFF 303099) (Mesorhizobium loti (strain MAFF 303099)).